Here is a 491-residue protein sequence, read N- to C-terminus: Ketol-acid reductoisomerase (NADP(+)) (491 aa).

Residues 15 to 208 (AQLGKCRFMG…GGHRAGVLES (194 aa)) form the KARI N-terminal Rossmann domain. NADP(+)-binding positions include 45 to 48 (CGAQ), Arg-68, Arg-76, Ser-78, and 108 to 110 (DKQ). His-132 is a catalytic residue. Residue Gly-158 participates in NADP(+) binding. KARI C-terminal knotted domains lie at 209 to 344 (SFVA…TAPQ) and 345 to 484 (FEGK…MTDM). Asp-217, Glu-221, Glu-389, and Glu-393 together coordinate Mg(2+). Ser-414 lines the substrate pocket.

It belongs to the ketol-acid reductoisomerase family. Requires Mg(2+) as cofactor.

The catalysed reaction is (2R)-2,3-dihydroxy-3-methylbutanoate + NADP(+) = (2S)-2-acetolactate + NADPH + H(+). It catalyses the reaction (2R,3R)-2,3-dihydroxy-3-methylpentanoate + NADP(+) = (S)-2-ethyl-2-hydroxy-3-oxobutanoate + NADPH + H(+). It participates in amino-acid biosynthesis; L-isoleucine biosynthesis; L-isoleucine from 2-oxobutanoate: step 2/4. It functions in the pathway amino-acid biosynthesis; L-valine biosynthesis; L-valine from pyruvate: step 2/4. In terms of biological role, involved in the biosynthesis of branched-chain amino acids (BCAA). Catalyzes an alkyl-migration followed by a ketol-acid reduction of (S)-2-acetolactate (S2AL) to yield (R)-2,3-dihydroxy-isovalerate. In the isomerase reaction, S2AL is rearranged via a Mg-dependent methyl migration to produce 3-hydroxy-3-methyl-2-ketobutyrate (HMKB). In the reductase reaction, this 2-ketoacid undergoes a metal-dependent reduction by NADPH to yield (R)-2,3-dihydroxy-isovalerate. This chain is Ketol-acid reductoisomerase (NADP(+)), found in Salmonella agona (strain SL483).